The following is an 82-amino-acid chain: Small ribosomal subunit protein uS17 (82 aa).

Belongs to the universal ribosomal protein uS17 family. Part of the 30S ribosomal subunit.

Functionally, one of the primary rRNA binding proteins, it binds specifically to the 5'-end of 16S ribosomal RNA. In Synechococcus elongatus (strain ATCC 33912 / PCC 7942 / FACHB-805) (Anacystis nidulans R2), this protein is Small ribosomal subunit protein uS17.